The sequence spans 440 residues: Beta-1,3-galactosyl-O-glycosyl-glycoprotein beta-1,6-N-acetylglucosaminyltransferase 3 (440 aa).

At 1–12 (MKMTGWKKKLCR) the chain is on the cytoplasmic side. The helical; Signal-anchor for type II membrane protein transmembrane segment at 13–30 (GHHLWALGCYMLLAVVAL) threads the bilayer. At 31–440 (RLSLRLKCDV…RHKAIYGTEL (410 aa)) the chain is on the lumenal side. Residues Asn-72 and Asn-108 are each glycosylated (N-linked (GlcNAc...) asparagine). 4 cysteine pairs are disulfide-bonded: Cys-73–Cys-230, Cys-164–Cys-384, Cys-185–Cys-212, and Cys-393–Cys-425.

The protein belongs to the glycosyltransferase 14 family. Post-translationally, N-glycosylated. As to expression, primarily expressed in mucus-secreting tissues.

The protein resides in the golgi apparatus membrane. It carries out the reaction a 3-O-[beta-D-galactosyl-(1-&gt;3)-N-acetyl-alpha-D-galactosaminyl]-L-seryl-[protein] + UDP-N-acetyl-alpha-D-glucosamine = 3-O-{beta-D-galactosyl-(1-&gt;3)-[N-acetyl-beta-D-glucosaminyl-(1-&gt;6)]-N-acetyl-alpha-D-galactosaminyl}-L-seryl-[protein] + UDP + H(+). The enzyme catalyses a 3-O-[beta-D-galactosyl-(1-&gt;3)-N-acetyl-alpha-D-galactosaminyl]-L-threonyl-[protein] + UDP-N-acetyl-alpha-D-glucosamine = a 3-O-{beta-D-galactosyl-(1-&gt;3)-[N-acetyl-beta-D-glucosaminyl-(1-&gt;6)]-N-acetyl-alpha-D-galactosaminyl}-L-threonyl-[protein] + UDP + H(+). The catalysed reaction is a beta-D-Gal-(1-&gt;4)-beta-D-GlcNAc-(1-&gt;3)-beta-D-Gal-(1-&gt;4)-beta-D-GlcNAc derivative + UDP-N-acetyl-alpha-D-glucosamine = a beta-D-Gal-(1-&gt;4)-beta-D-GlcNAc-(1-&gt;3)-[beta-D-GlcNAc-(1-&gt;6)]-beta-D-Gal-(1-&gt;4)-N-acetyl-beta-D-glucosaminyl derivative + UDP + H(+). It catalyses the reaction 3-O-[N-acetyl-beta-D-glucosaminyl-(1-&gt;3)-N-acetyl-alpha-D-galactosaminyl]-L-seryl-[protein] + UDP-N-acetyl-alpha-D-glucosamine = 3-O-[N-acetyl-beta-D-glucosaminyl-(1-&gt;3)-[N-acetyl-beta-D-glucosaminyl-(1-&gt;6)]-N-acetyl-alpha-D-galactosaminyl]-L-seryl-[protein] + UDP + H(+). It carries out the reaction a 3-O-[N-acetyl-beta-D-glucosaminyl-(1-&gt;3)-N-acetyl-alpha-D-galactosaminyl]-L-threonyl-[protein] + UDP-N-acetyl-alpha-D-glucosamine = 3-O-[N-acetyl-beta-D-glucosaminyl-(1-&gt;3)-[N-acetyl-beta-D-glucosaminyl-(1-&gt;6)]-N-acetyl-alpha-D-galactosaminyl]-L-threonyl-[protein] + UDP + H(+). It participates in protein modification; protein glycosylation. Its function is as follows. Glycosyltransferase that can synthesize all known mucin beta 6 N-acetylglucosaminides. Mediates core 2 and core 4 O-glycan branching, 2 important steps in mucin-type biosynthesis. Also has I-branching enzyme activity by converting linear into branched poly-N-acetyllactosaminoglycans, leading to introduce the blood group I antigen during embryonic development. The polypeptide is Beta-1,3-galactosyl-O-glycosyl-glycoprotein beta-1,6-N-acetylglucosaminyltransferase 3 (GCNT3) (Bos taurus (Bovine)).